Reading from the N-terminus, the 324-residue chain is Tetrahydromethanopterin:alpha-L-glutamate ligase (324 aa).

One can recognise an ATP-grasp domain in the interval 113-321; sequence SYLLARAGLP…PAEYILEYLQ (209 aa). Residues K148, 195–204, and R220 contribute to the ATP site; that span reads QEFIENPGRD. D265 contributes to the Mg(2+) binding site. D265 lines the Mn(2+) pocket. Positions 274-293 are disordered; sequence TGNENKKTEDKSTGQGSRIL. Residues E294 and N296 each coordinate Mg(2+). 2 residues coordinate Mn(2+): E294 and N296.

The protein belongs to the RimK family. MptN subfamily. Homodimer. It depends on Mg(2+) as a cofactor. Mn(2+) serves as cofactor.

The catalysed reaction is 5,6,7,8-tetrahydromethanopterin + L-glutamate + ATP = 5,6,7,8-tetrahydrosarcinapterin + ADP + phosphate + H(+). It functions in the pathway cofactor biosynthesis; 5,6,7,8-tetrahydrosarcinapterin biosynthesis. Its function is as follows. Catalyzes the ATP or GTP-dependent addition of one L-glutamate molecule to tetrahydromethanopterin, producing tetrahydrosarcinapterin. The chain is Tetrahydromethanopterin:alpha-L-glutamate ligase (mptN) from Methanosarcina acetivorans (strain ATCC 35395 / DSM 2834 / JCM 12185 / C2A).